The sequence spans 200 residues: ATP-dependent Clp protease proteolytic subunit (200 aa).

Ser-103 serves as the catalytic Nucleophile. His-128 is an active-site residue.

The protein belongs to the peptidase S14 family. In terms of assembly, fourteen ClpP subunits assemble into 2 heptameric rings which stack back to back to give a disk-like structure with a central cavity, resembling the structure of eukaryotic proteasomes.

It is found in the cytoplasm. It catalyses the reaction Hydrolysis of proteins to small peptides in the presence of ATP and magnesium. alpha-casein is the usual test substrate. In the absence of ATP, only oligopeptides shorter than five residues are hydrolyzed (such as succinyl-Leu-Tyr-|-NHMec, and Leu-Tyr-Leu-|-Tyr-Trp, in which cleavage of the -Tyr-|-Leu- and -Tyr-|-Trp bonds also occurs).. In terms of biological role, cleaves peptides in various proteins in a process that requires ATP hydrolysis. Has a chymotrypsin-like activity. Plays a major role in the degradation of misfolded proteins. The chain is ATP-dependent Clp protease proteolytic subunit from Vibrio parahaemolyticus serotype O3:K6 (strain RIMD 2210633).